Reading from the N-terminus, the 546-residue chain is Glutathione reductase (546 aa).

Residues 2-46 (YKHRYFHFFFFFFFFLVSTKIIRSFTFLNNNTNLSNPVYFKKKAN) constitute an apicoplast transit peptide. FAD-binding residues include serine 58 and glycine 59. Serine 58 is a glutathione binding site. Arginine 65 contacts glutathione. Positions 78, 85, 86, and 94 each coordinate FAD. Residues cysteine 86 and cysteine 91 are joined by a disulfide bond. Glutathione is bound at residue tyrosine 141. Alanine 157 is an FAD binding site. Positions 233, 236, 253, 259, and 318 each coordinate NADP(+). Positions 358 and 400 each coordinate FAD. Glutathione is bound at residue arginine 408. An NADP(+)-binding site is contributed by valine 430. Residue histidine 531 participates in FAD binding. The Proton acceptor role is filled by histidine 531.

The protein belongs to the class-I pyridine nucleotide-disulfide oxidoreductase family. As to quaternary structure, homodimer. FAD serves as cofactor.

It is found in the cytoplasm. Its subcellular location is the plastid. It localises to the apicoplast. The enzyme catalyses 2 glutathione + NADP(+) = glutathione disulfide + NADPH + H(+). Catalyzes the reduction of glutathione disulfide (GSSG) to reduced glutathione (GSH). Constitutes the major mechanism to maintain a high GSH:GSSG ratio in the cytosol. This chain is Glutathione reductase, found in Plasmodium falciparum (isolate 3D7).